A 122-amino-acid chain; its full sequence is Large ribosomal subunit protein uL18 (122 aa).

The protein belongs to the universal ribosomal protein uL18 family. As to quaternary structure, part of the 50S ribosomal subunit; part of the 5S rRNA/L5/L18/L25 subcomplex. Contacts the 5S and 23S rRNAs.

This is one of the proteins that bind and probably mediate the attachment of the 5S RNA into the large ribosomal subunit, where it forms part of the central protuberance. The sequence is that of Large ribosomal subunit protein uL18 from Heliobacterium modesticaldum (strain ATCC 51547 / Ice1).